The primary structure comprises 465 residues: Phosphatidylserine synthase 1 (465 aa).

The Cytoplasmic segment spans residues 1–35 (MATTFRSQTLSKDDVNYRMHFRMINEQQVEDITIQ). The helical transmembrane segment at 36–56 (FFYKPHTISLLTVTVLSLMYF) threads the bilayer. The Lumenal portion of the chain corresponds to 57–70 (AFTRDDGDPDSNLR). Residues 71–91 (VGLILLVSFFLVISVLAFPNG) form a helical membrane-spanning segment. Over 92–102 (PFTRPHPAIWR) the chain is Cytoplasmic. A helical transmembrane segment spans residues 103–123 (IVFGLSVLYFLFLVFIIFLNW). The Lumenal portion of the chain corresponds to 124-286 (DQVKALMFWL…WLDPKSSLQR (163 aa)). A helical membrane pass occupies residues 287-307 (VMGVYLFMIIWQLTELNTFFL). The Cytoplasmic segment spans residues 308-309 (KH). The helical transmembrane segment at 310–330 (IFVFPACHALSWCRILFIGII) threads the bilayer. The Lumenal portion of the chain corresponds to 331-355 (TAPTVRQYYAYLTDTQCKRVGTQCW). Residues 356–376 (VFGAIAFLEALACIKFGQDLF) traverse the membrane as a helical segment. Residues 377–380 (SKTQ) are Cytoplasmic-facing. A helical membrane pass occupies residues 381–401 (ILYVILWLVCLAFITFLCLYV). Residues 402 to 465 (MVWYAENYGP…DSRTINGMEK (64 aa)) are Lumenal-facing. Positions 446–465 (CSTRKRRDSGDSRTINGMEK) are disordered.

The protein belongs to the phosphatidyl serine synthase family.

It is found in the endoplasmic reticulum membrane. The enzyme catalyses a 1,2-diacyl-sn-glycero-3-phosphoethanolamine + L-serine = a 1,2-diacyl-sn-glycero-3-phospho-L-serine + ethanolamine. It carries out the reaction a 1,2-diacyl-sn-glycero-3-phosphocholine + L-serine = a 1,2-diacyl-sn-glycero-3-phospho-L-serine + choline. It participates in phospholipid metabolism; phosphatidylserine biosynthesis. Catalyzes a base-exchange reaction in which the polar head group of phosphatidylethanolamine (PE) or phosphatidylcholine (PC) is replaced by L-serine. Catalyzes mainly the conversion of phosphatidylcholine but also converts, in vitro and to a lesser extent, phosphatidylethanolamine. This chain is Phosphatidylserine synthase 1 (ptdss1), found in Danio rerio (Zebrafish).